Reading from the N-terminus, the 688-residue chain is UvrABC system protein B (688 aa).

A Helicase ATP-binding domain is found at 31-188 (GRVNAGEPDV…RKFVSMQYQR (158 aa)). Position 44–51 (44–51 (GATGTGKS)) interacts with ATP. A Beta-hairpin motif is present at residues 97–120 (YYDYYQPEAYVPQTDTFIEKDSSV). In terms of domain architecture, Helicase C-terminal spans 434–587 (QIDDLLEQIR…QVAYNTEHGI (154 aa)). Residues 607–632 (GEDTKKMLEGRGGGKRSPTPNLRREG) form a disordered region. Positions 642–677 (ETIISDLNDQMLQAAGELKFELAARLRDELGDLKRE) constitute a UVR domain.

The protein belongs to the UvrB family. In terms of assembly, forms a heterotetramer with UvrA during the search for lesions. Interacts with UvrC in an incision complex.

Its subcellular location is the cytoplasm. The UvrABC repair system catalyzes the recognition and processing of DNA lesions. A damage recognition complex composed of 2 UvrA and 2 UvrB subunits scans DNA for abnormalities. Upon binding of the UvrA(2)B(2) complex to a putative damaged site, the DNA wraps around one UvrB monomer. DNA wrap is dependent on ATP binding by UvrB and probably causes local melting of the DNA helix, facilitating insertion of UvrB beta-hairpin between the DNA strands. Then UvrB probes one DNA strand for the presence of a lesion. If a lesion is found the UvrA subunits dissociate and the UvrB-DNA preincision complex is formed. This complex is subsequently bound by UvrC and the second UvrB is released. If no lesion is found, the DNA wraps around the other UvrB subunit that will check the other stand for damage. The polypeptide is UvrABC system protein B (Clavibacter sepedonicus (Clavibacter michiganensis subsp. sepedonicus)).